Consider the following 468-residue polypeptide: Tissue alpha-L-fucosidase (468 aa).

The first 29 residues, 1–29, serve as a signal peptide directing secretion; sequence MRAPGERWRPAGAALWLLLLLLLLGATES. Position 172 is a phosphothreonine (Thr-172). N-linked (GlcNAc...) asparagine glycans are attached at residues Asn-243, Asn-270, and Asn-384.

Belongs to the glycosyl hydrolase 29 family. In terms of assembly, homotetramer.

It localises to the lysosome. It carries out the reaction an alpha-L-fucoside + H2O = L-fucose + an alcohol. It catalyses the reaction a neolactoside IV(2)-alpha-Fuc-nLc4Cer(d18:1(4E)) + H2O = a neolactoside nLc4Cer(d18:1(4E)) + L-fucose. The enzyme catalyses a neolactoside IV(2)-alpha-Fuc-nLc4Cer(d18:0) + H2O = a neolactoside nLc4Cer(d18:0) + L-fucose. Functionally, alpha-L-fucosidase is responsible for hydrolyzing the alpha-1,6-linked fucose joined to the reducing-end N-acetylglucosamine of the carbohydrate moieties of glycoproteins. This chain is Tissue alpha-L-fucosidase (FUCA1), found in Macaca fascicularis (Crab-eating macaque).